Reading from the N-terminus, the 80-residue chain is SPbeta prophage-derived thioredoxin-like protein YosR (80 aa).

The region spanning 1–80 (MRLIKLEQPN…ELDELLKELR (80 aa)) is the Thioredoxin domain. Cys-11 and Cys-14 are joined by a disulfide.

It belongs to the thioredoxin family.

The protein is SPbeta prophage-derived thioredoxin-like protein YosR (yosR) of Bacillus subtilis (strain 168).